Consider the following 87-residue polypeptide: Conotoxin Cl12.3 (87 aa).

The first 19 residues, 1–19 (MKLTCVLVVLLLFLPYGDL), serve as a signal peptide directing secretion. The propeptide occupies 20 to 42 (ITNNYIGGAARKVTPWRRNLKTR).

This sequence belongs to the conotoxin O1 superfamily. In terms of processing, contains 4 disulfide bonds. In terms of tissue distribution, expressed by the venom duct.

It is found in the secreted. The protein is Conotoxin Cl12.3 of Californiconus californicus (California cone).